Here is a 199-residue protein sequence, read N- to C-terminus: uncharacterized protein (199 aa).

Helical transmembrane passes span 27–47, 55–75, and 172–192; these read LIKITLVNLYLALTVPLPILA, LLTLLLTVGLMGGLVALVAAL, and LLLLLFTFLLWGSQLAIVLLL.

It is found in the cell membrane. This is an uncharacterized protein from Synechocystis sp. (strain ATCC 27184 / PCC 6803 / Kazusa).